The chain runs to 468 residues: Soluble pyridine nucleotide transhydrogenase (468 aa).

36-45 provides a ligand contact to FAD; it reads ERYKNVGGGC.

This sequence belongs to the class-I pyridine nucleotide-disulfide oxidoreductase family. FAD is required as a cofactor.

The protein localises to the cytoplasm. The catalysed reaction is NAD(+) + NADPH = NADH + NADP(+). Functionally, conversion of NADPH, generated by peripheral catabolic pathways, to NADH, which can enter the respiratory chain for energy generation. This chain is Soluble pyridine nucleotide transhydrogenase, found in Hamiltonella defensa subsp. Acyrthosiphon pisum (strain 5AT).